The chain runs to 446 residues: Anthranilate N-benzoyltransferase protein 2 (446 aa).

Catalysis depends on proton acceptor residues His164 and Asp393.

It belongs to the plant acyltransferase family. Post-translationally, N-terminus is blocked.

The catalysed reaction is anthranilate + benzoyl-CoA = N-benzoylanthranilate + CoA. Its pathway is phytoalexin biosynthesis; methoxydianthramide B biosynthesis. Its function is as follows. Catalyzes the formation of N-benzoylanthranilate, in the course of methoxydianthramide B, a phytoalexin. Phytoalexins are produced in response to infection by parasites, and are essential for the expression of disease resistance. The chain is Anthranilate N-benzoyltransferase protein 2 (HCBT2) from Dianthus caryophyllus (Carnation).